The primary structure comprises 25 residues: MXPARALIDLQALRHNYQLAAEVIG.

This sequence belongs to the alanine racemase family. As to quaternary structure, homodimer. Requires pyridoxal 5'-phosphate as cofactor.

The enzyme catalyses L-alanine = D-alanine. Its pathway is amino-acid biosynthesis; D-alanine biosynthesis; D-alanine from L-alanine: step 1/1. Functionally, catalyzes the interconversion of L-alanine and D-alanine. This chain is Alanine racemase, found in Pseudomonas fluorescens.